The following is a 526-amino-acid chain: Alpha-1,3-mannosyl-glycoprotein 4-beta-N-acetylglucosaminyltransferase A (526 aa).

At 1-6 the chain is on the cytoplasmic side; sequence MRLRNG. The chain crosses the membrane as a helical; Signal-anchor for type II membrane protein span at residues 7-27; it reads TVATALVFVTSFLTLSWYTTW. Residues 28 to 63 adopt a coiled-coil conformation; sequence QNGKEKLIAYQREFLALKERLRVAEHRISQRSSELN. At 28 to 526 the chain is on the lumenal side; it reads QNGKEKLIAY…NEIHIKKVTS (499 aa). Asparagine 449 is a glycosylation site (N-linked (GlcNAc...) asparagine). Serine 465 is modified (phosphoserine).

The protein belongs to the glycosyltransferase 54 family. A divalent metal cation serves as cofactor. In terms of processing, N-glycosylated.

It is found in the golgi apparatus membrane. The protein localises to the secreted. It catalyses the reaction N(4)-{beta-D-GlcNAc-(1-&gt;2)-alpha-D-Man-(1-&gt;3)-[beta-D-GlcNAc-(1-&gt;2)-alpha-D-Man-(1-&gt;6)]-beta-D-Man-(1-&gt;4)-beta-D-GlcNAc-(1-&gt;4)-beta-D-GlcNAc}-L-asparaginyl-[protein] + UDP-N-acetyl-alpha-D-glucosamine = N(4)-{beta-D-GlcNAc-(1-&gt;2)-[beta-D-GlcNAc-(1-&gt;4)]-alpha-D-Man-(1-&gt;3)-[beta-D-GlcNAc-(1-&gt;2)-alpha-D-Man-(1-&gt;6)]-beta-D-Man-(1-&gt;4)-beta-D-GlcNAc-(1-&gt;4)-beta-D-GlcNAc}-L-asparaginyl-[protein] + UDP + H(+). The catalysed reaction is an N(4)-{beta-D-GlcNAc-(1-&gt;2)-alpha-D-Man-(1-&gt;3)-[alpha-D-Man-(1-&gt;6)]-beta-D-Man-(1-&gt;4)-beta-D-GlcNAc-(1-&gt;4)-beta-D-GlcNAc}-L-asparaginyl-[protein] + UDP-N-acetyl-alpha-D-glucosamine = an N(4)-{beta-D-GlcNAc-(1-&gt;2)-[beta-D-GlcNAc-(1-&gt;4)]-alpha-D-Man-(1-&gt;3)-[alpha-D-Man-(1-&gt;6)]-beta-D-Man-(1-&gt;4)-beta-D-GlcNAc-(1-&gt;4)-beta-D-GlcNAc}-L-asparaginyl-[protein] + UDP + H(+). It carries out the reaction an N(4)-{beta-D-GlcNAc-(1-&gt;2)-alpha-D-Man-(1-&gt;3)-[beta-D-GlcNAc-(1-&gt;2)-[beta-D-GlcNAc-(1-&gt;6)]-alpha-D-Man-(1-&gt;6)]-beta-D-Man-(1-&gt;4)-beta-D-GlcNAc-(1-&gt;4)-beta-D-GlcNAc}-L-asparaginyl-[protein] + UDP-N-acetyl-alpha-D-glucosamine = an N(4)-{beta-D-GlcNAc-(1-&gt;2)-[beta-D-GlcNAc-(1-&gt;4)]-alpha-D-Man-(1-&gt;3)-[beta-D-GlcNAc-(1-&gt;2)-[beta-D-GlcNAc-(1-&gt;6)]-alpha-D-Man-(1-&gt;6)]-beta-D-Man-(1-&gt;4)-beta-D-GlcNAc-(1-&gt;4)-beta-D-GlcNAc}-L-asparaginyl-[protein] + UDP + H(+). The enzyme catalyses an N(4)-{beta-D-GlcNAc-(1-&gt;2)-alpha-D-Man-(1-&gt;3)-[beta-D-GlcNAc-(1-&gt;2)-alpha-D-Man-(1-&gt;6)]-beta-D-Man-(1-&gt;4)-beta-D-GlcNAc-(1-&gt;4)-[alpha-L-Fuc-(1-&gt;6)]-beta-D-GlcNAc}-L-asparaginyl-[protein] + UDP-N-acetyl-alpha-D-glucosamine = N(4)-{beta-D-GlcNAc-(1-&gt;2)-[beta-D-GlcNAc-(1-&gt;4)]-alpha-D-Man-(1-&gt;3)-[beta-D-GlcNAc-(1-&gt;2)-alpha-D-Man-(1-&gt;6)]-beta-D-Man-(1-&gt;4)-beta-D-GlcNAc-(1-&gt;4)-[alpha-L-Fuc-(1-&gt;6)]-beta-D-GlcNAc}-asparaginyl-[protein] + UDP + H(+). It catalyses the reaction an N(4)-{beta-D-GlcNAc-(1-&gt;2)-alpha-D-Man-(1-&gt;3)-[beta-D-Gal-(1-&gt;4)-beta-D-GlcNAc-(1-&gt;2)-alpha-D-Man-(1-&gt;6)]-beta-D-Man-(1-&gt;4)-beta-D-GlcNAc-(1-&gt;4)-beta-D-GlcNAc}-L-asparaginyl-[protein] + UDP-N-acetyl-alpha-D-glucosamine = an N(4)-{beta-D-GlcNAc-(1-&gt;2)-[beta-D-GlcNAc-(1-&gt;4)]-alpha-D-Man-(1-&gt;3)-[beta-D-Gal-(1-&gt;4)-beta-D-GlcNAc-(1-&gt;2)-alpha-D-Man-(1-&gt;6)]-beta-D-Man-(1-&gt;4)-beta-D-GlcNAc-(1-&gt;4)-beta-D-GlcNAc}-L-asparaginyl-[protein] + UDP + H(+). The catalysed reaction is N(4)-{beta-D-GlcNAc-(1-&gt;2)-alpha-D-Man-(1-&gt;3)-[alpha-D-Man-(1-&gt;3)-{alpha-D-Man-(1-&gt;6)}-alpha-D-Man-(1-&gt;6)]-beta-D-Man-(1-&gt;4)-beta-D-GlcNAc-(1-&gt;4)-beta-D-GlcNAc}-asparaginyl-[protein] + UDP-N-acetyl-alpha-D-glucosamine = N(4)-{beta-D-GlcNAc-(1-&gt;2)-[beta-D-GlcNAc-(1-&gt;4)]-alpha-D-Man-(1-&gt;3)-[alpha-D-Man-(1-&gt;3)-{alpha-D-Man-(1-&gt;6)}-alpha-D-Man-(1-&gt;6)]-beta-D-Man-(1-&gt;4)-beta-D-GlcNAc-(1-&gt;4)-beta-D-GlcNAc}-asparaginyl-[protein] + UDP + H(+). It carries out the reaction N(4)-{beta-D-GlcNAc-(1-&gt;2)-alpha-D-Man-(1-&gt;3)-beta-D-Man-(1-&gt;4)-beta-D-GlcNAc-(1-&gt;4)-beta-D-GlcNAc}-asparaginyl-[protein] + UDP-N-acetyl-alpha-D-glucosamine = N(4)-{beta-D-GlcNAc-(1-&gt;2)-[beta-D-GlcNAc-(1-&gt;4)]-alpha-D-Man-(1-&gt;3)-beta-D-Man-(1-&gt;4)-beta-D-GlcNAc-(1-&gt;4)-beta-D-GlcNAc}-asparaginyl-[protein] + UDP + H(+). It participates in protein modification; protein glycosylation. Inhibited by UDP. Functionally, glycosyltransferase that catalyze the transfer of GlcNAc from UDP-GlcNAc to the GlcNAcbeta1-2Manalpha1-3 arm of the core structure of N-linked glycans through a beta1-4 linkage and participates in the production of tri- and tetra-antennary N-linked sugar chains. Involved in glucose transport by mediating SLC2A2/GLUT2 glycosylation, thereby controlling cell-surface expression of SLC2A2 in pancreatic beta cells. This is Alpha-1,3-mannosyl-glycoprotein 4-beta-N-acetylglucosaminyltransferase A from Rattus norvegicus (Rat).